The following is a 153-amino-acid chain: Neuromedin-S (153 aa).

The signal sequence occupies residues 1–26 (MKHPLPHYSPILFIYCFCMLQIPSSG). 3 consecutive propeptides follow at residues 27-69 (ASPP…VYKR), 70-105 (FLFH…ASRR), and 106-108 (MKR). Residue Asn-144 is modified to Asparagine amide. A propeptide spanning residues 147–153 (YTDNNFQ) is cleaved from the precursor.

It belongs to the NmU family.

It localises to the secreted. Functionally, implicated in the regulation of circadian rhythms through autocrine and/or paracrine actions. The protein is Neuromedin-S (Nms) of Mus musculus (Mouse).